The sequence spans 265 residues: MAKVPDLFEDLKNCYSENEEYSSEIDHLSLNQKSFYDMSCDPLHEDCMSLSTSEISKTSQLTFKENVVVVAANGKILKKRRLSLSQFITDDDLEGIANDTEEVIMKPRSVAYNFHNNEKYNYIRIIKSQFILNDNLNQSIVRQTGGNYLMTAALQNLDDAVKFDMGAYTSEDSKLPVTLRISKTRLFVSAQNEDEPVLLKEMPETPKTIRDETNLLFFWERHGSKHYFKSVAQPKLFIATQERKLVHMARGQPSITDFRLLETQP.

A propeptide spanning residues 1–108 (MAKVPDLFED…DTEEVIMKPR (108 aa)) is cleaved from the precursor. The residue at position 78 (lysine 78) is an N6-acetyllysine. Positions 78-82 (KKRRL) are nuclear localization signal (NLS). Residue serine 83 is modified to Phosphoserine. Residues asparagine 98 and asparagine 137 are each glycosylated (N-linked (GlcNAc...) asparagine).

Belongs to the IL-1 family. Monomer. Interacts with TMED10; the interaction mediates the translocation from the cytoplasm into the ERGIC (endoplasmic reticulum-Golgi intermediate compartment) and thereby secretion. Interacts with IL1R1. Interacts with S100A13; this interaction is the first step in the export of IL1A, followed by direct translocation of this complex across the plasma membrane. Post-translationally, acetylated within its nuclear localization sequence, which impacts subcellular localization. Proteolytic processed by CAPN1 in a calcium-dependent manner. Cleavage from 31 kDa precursor to 18 kDa biologically active molecules. In terms of processing, phosphorylated. Phosphorylation greatly enhances susceptibility to digestion and promotes the conversion of pre-IL1A alpha to the biologically active IL1A.

Its subcellular location is the nucleus. It localises to the cytoplasm. It is found in the secreted. Functionally, cytokine constitutively present intracellularly in nearly all resting non-hematopoietic cells that plays an important role in inflammation and bridges the innate and adaptive immune systems. After binding to its receptor IL1R1 together with its accessory protein IL1RAP, forms the high affinity interleukin-1 receptor complex. Signaling involves the recruitment of adapter molecules such as MYD88, IRAK1 or IRAK4. In turn, mediates the activation of NF-kappa-B and the three MAPK pathways p38, p42/p44 and JNK pathways. Within the cell, acts as an alarmin and cell death results in its liberation in the extracellular space after disruption of the cell membrane to induce inflammation and alert the host to injury or damage. In addition to its role as a danger signal, which occurs when the cytokine is passively released by cell necrosis, directly senses DNA damage and acts as signal for genotoxic stress without loss of cell integrity. This Canis lupus familiaris (Dog) protein is Interleukin-1 alpha (IL1A).